Reading from the N-terminus, the 863-residue chain is MKSAELRQAFLDYFASQGHTKVSSSSLVPANDPTLLFTNAGMNQFKDVFLGRESRDYTRATSSQRCVRAGGKHNDLENVGYTARHHTFFEMLGNFSFGDYFKREAIKFAWEFLTGTLGLPEERLWVTVHVSDDEAADIWLKEMGVSAERFSRLDEDNFWQMGDTGPCGPSSEIFYDHGADVPGGPPGSADEDLDRYIEIWNLVFMQYDRQPDGELQPLPKPSVDTGMGLERIAAVLQGVHSNYEIDLFQALLQAAAKATGCTDLEEKSLRVIADHIRSASFLICDGVIPSNEGRGYVLRRIIRRALRHGHKLGQDKPFFSTLVAALVAEMGEAYPELGREQARIEKALLAEEEQFGRTLAAGMKVLESAIEQLDGRVLPGDVLFNLYDTHGFPPDLTADVARERDLSVDMDGFEAAMAAQRERARGAGSFANDYSDRLNIDAITDFSGYEKLADDNTVVALYKDGAAVDTLNAGEEGMVVLDRTPFYAESGGQVGDTGALIADEARFMVTDTRKRQAAHVHVGKQVSGSLTIGGKVSACVDVDRRLAVMRNHSATHLMHAALRNVLGEHVQQKGSLVSADYLRFDFSHGEAVSEAQREEIEILVNRQILANTAVTTELMDIESAREAGAMALFGEKYDDQVRVLSMGSDGFSKELCGGTHVNRTGDIGLFRITLEASAAAGVRRIEAVTGEHALAVMRRQERALSEIAATVKSSLDNAADRVRSQAQKVRELEKEIERLKQKLASGAGGDLTSEVQDINGVKVLATQIDGADGKTLRVTMDKLKDKLGSAVIVLAAVEGEKVALVAGVTKDLTTKYKAGDLLKFVAEQVDGRGGGRPDMAQGGGNNPAALPGALESVKAWVAE.

Zn(2+) is bound by residues His552, His556, Cys656, and His660.

This sequence belongs to the class-II aminoacyl-tRNA synthetase family. The cofactor is Zn(2+).

The protein localises to the cytoplasm. It carries out the reaction tRNA(Ala) + L-alanine + ATP = L-alanyl-tRNA(Ala) + AMP + diphosphate. Functionally, catalyzes the attachment of alanine to tRNA(Ala) in a two-step reaction: alanine is first activated by ATP to form Ala-AMP and then transferred to the acceptor end of tRNA(Ala). Also edits incorrectly charged Ser-tRNA(Ala) and Gly-tRNA(Ala) via its editing domain. The chain is Alanine--tRNA ligase from Alcanivorax borkumensis (strain ATCC 700651 / DSM 11573 / NCIMB 13689 / SK2).